We begin with the raw amino-acid sequence, 670 residues long: Probable E3 ubiquitin ligase complex SCF subunit sconB (670 aa).

Residues 1–38 (MSSPPPFTSIFGGPAESAEEIDADADNSQLKPHNRSNV) form a disordered region. Over residues 27–38 (NSQLKPHNRSNV) the composition is skewed to polar residues. The F-box domain occupies 163 to 209 (IDFIAALPPEISFKILCYLDTTSLCKAAQVSRRWRALADDDVVWHRM). Positions 249–287 (VNGTSPKATPALPEDASPVADSSGTGKRKPEPSEEETAV) are disordered. WD repeat units lie at residues 339 to 376 (GHTN…EIRT), 379 to 418 (GHES…STYT), 420 to 456 (HRGG…TCLL), 458 to 499 (GHTD…RTFH), 553 to 596 (ISQS…CLRT), 599 to 636 (GHLE…CERT), and 639 to 670 (GHSG…SFQS).

It belongs to the WD repeat MET30/SCONB/SCON-2 family. As to quaternary structure, component of the SCF(sconB) E3 ubiquitin ligase complex.

The protein operates within protein modification; protein ubiquitination. Functionally, component of the SCF(sconB) E3 ubiquitin ligase complex involved in the regulation of sulfur metabolite repression, probably by mediating the inactivation or degradation of the metR transcription factor. In Aspergillus niger (strain ATCC MYA-4892 / CBS 513.88 / FGSC A1513), this protein is Probable E3 ubiquitin ligase complex SCF subunit sconB (sconB).